The sequence spans 633 residues: MNSVLNSGRNTICDAYNVVVHDPFSFQHKSLDTIQKEWMEWKKDNHSLYVDPIVGTVASFLLKKLGSLIGKRILSELRNLIFPSGSTNLMEDILRETEKFLNQKLNTDTLSRVNAELTGLQANVEEFNRQVDNFLNPNRNAVPLSITSSVNTMQQLFLNRLSQFQMQGYQLLLLPLFAQAANLHLSFIRDVILNAEEWGISAATLRTYQNHLRNYTRDYSNYCIDTYQTAFRGLNTRLHDMLEFRTYMFLNVFEYVSIWSLFKYQSLLVSSGANLYASGSGPQQTQLFTSQDWPFLYSLFQVNSNYVLSGFSGASLFTTFPNIGGLPGSTTTQALLAARVNYSGGITSGSIGGSNFNQNFNCNTISPPLSTSFVRSWLDSGSDRQGVNTVTNWQTESFETTSGLRCGAFTPRGNSNYYPGYFIRNISGVSLVLRNEDLKRPLYYNEKRNIESPSGTPGGARAYMVSVHNKKNNIYAVHENGTMIHLAPEDNTGFTISPIHATQVNNQTRTFISEKFGNQGDSLRFEQSNTTARYTLRGNGNSYNLYLRVSSIGNSTIRVTINGRVYTASNVNTTTNNDGVNDNGARFSDINIGNVVASSNSDVPLDINVTLNSGTQFDLMNIMLVPTNISPLY.

The protein belongs to the delta endotoxin family.

Functionally, promotes colloidosmotic lysis by binding to the midgut epithelial cells of insects. In Bacillus thuringiensis, this protein is Pesticidal crystal protein Cry2Ad (cry2Ad).